The primary structure comprises 85 residues: Protein MANBAL (85 aa).

Residues 24–44 form a helical membrane-spanning segment; it reads YGLFLGAIFQLICVLAIIVPI. Over residues 49 to 64 the composition is skewed to basic and acidic residues; it reads EAEAEQAEPRSAEGPK. The disordered stretch occupies residues 49–85; that stretch reads EAEAEQAEPRSAEGPKKPKAAIASTNKRPKKETKKKR. Residues 75 to 85 are compositionally biased toward basic residues; it reads KRPKKETKKKR.

It belongs to the UPF0239 family.

It localises to the membrane. The polypeptide is Protein MANBAL (Manbal) (Mus musculus (Mouse)).